Consider the following 435-residue polypeptide: D-inositol 3-phosphate glycosyltransferase (435 aa).

His25 contacts 1D-myo-inositol 3-phosphate. Residues 31–32 and Gly39 each bind UDP-N-acetyl-alpha-D-glucosamine; that span reads QP. 1D-myo-inositol 3-phosphate contacts are provided by residues 36 to 41, Lys94, Tyr127, Thr151, and Arg171; that span reads DAGGMN. UDP-N-acetyl-alpha-D-glucosamine contacts are provided by Arg245 and Lys250. Tyr320, Arg321, and Ala323 together coordinate Mg(2+). Glu333 and Glu341 together coordinate UDP-N-acetyl-alpha-D-glucosamine. Thr347 contacts Mg(2+).

It belongs to the glycosyltransferase group 1 family. MshA subfamily. In terms of assembly, homodimer.

The catalysed reaction is 1D-myo-inositol 3-phosphate + UDP-N-acetyl-alpha-D-glucosamine = 1D-myo-inositol 2-acetamido-2-deoxy-alpha-D-glucopyranoside 3-phosphate + UDP + H(+). Catalyzes the transfer of a N-acetyl-glucosamine moiety to 1D-myo-inositol 3-phosphate to produce 1D-myo-inositol 2-acetamido-2-deoxy-glucopyranoside 3-phosphate in the mycothiol biosynthesis pathway. This chain is D-inositol 3-phosphate glycosyltransferase, found in Streptosporangium roseum (strain ATCC 12428 / DSM 43021 / JCM 3005 / KCTC 9067 / NCIMB 10171 / NRRL 2505 / NI 9100).